A 221-amino-acid chain; its full sequence is uncharacterized protein (221 aa).

5 helical membrane passes run 2-22 (FIAK…FFFV), 34-54 (LLTL…LAQA), 97-117 (AYGL…SNVI), 131-151 (ALDQ…FMGI), and 177-197 (ILWP…LQVI).

It belongs to the peroxisomal membrane protein PXMP2/4 family.

It is found in the membrane. This is an uncharacterized protein from Schizosaccharomyces pombe (strain 972 / ATCC 24843) (Fission yeast).